The sequence spans 283 residues: 2-dehydro-3-deoxyphosphooctonate aldolase (283 aa).

This sequence belongs to the KdsA family.

It is found in the cytoplasm. The enzyme catalyses D-arabinose 5-phosphate + phosphoenolpyruvate + H2O = 3-deoxy-alpha-D-manno-2-octulosonate-8-phosphate + phosphate. It participates in carbohydrate biosynthesis; 3-deoxy-D-manno-octulosonate biosynthesis; 3-deoxy-D-manno-octulosonate from D-ribulose 5-phosphate: step 2/3. Its pathway is bacterial outer membrane biogenesis; lipopolysaccharide biosynthesis. The sequence is that of 2-dehydro-3-deoxyphosphooctonate aldolase from Parasynechococcus marenigrum (strain WH8102).